The chain runs to 488 residues: MLSAARLNRLFLAGELSAVEIAESALSRIAQVEPAVGAFITVAADHVIERAKKLDARRKAGDTELGPLAGVPIAVKDNICTSGMETTCASRILKGYVSPFDATVVERLRAAGAMIIGKANMDEFAMGSSGESSAFGVTRNPWDLERVPGGSSSGSAAAVAAGEAPLALGTDTGGSIRQPAAFTGIVGLKPTYGYVSRYGVVAFASSLDQVGPMGRDVEDVARLFEVIAGPDRRDATNAGRTPPALKFGGEPSLSGVRLGVPKELLGPGIDPGVKARVEEAIAQLEELGATVEECSLPSTEYALSAYYVIAVAEASSNLARFDGVRYGYRAAQAGGLHEMYSKTRGEGFGTEVKRRIMLGTYVLSAGHYDAYYRRAQQVRTLVVRDFERAFERYDALVTPTTPFTAWKIGEKVDDPVSMYLGDICTIPVNLAGLPAVSVPCGFVDGLPVGMQLIGKPFADTQILQIAWAYQKVTKHHEARPALTEEGGR.

Residues K76 and S151 each act as charge relay system in the active site. The Acyl-ester intermediate role is filled by S175.

The protein belongs to the amidase family. GatA subfamily. In terms of assembly, heterotrimer of A, B and C subunits.

The catalysed reaction is L-glutamyl-tRNA(Gln) + L-glutamine + ATP + H2O = L-glutaminyl-tRNA(Gln) + L-glutamate + ADP + phosphate + H(+). In terms of biological role, allows the formation of correctly charged Gln-tRNA(Gln) through the transamidation of misacylated Glu-tRNA(Gln) in organisms which lack glutaminyl-tRNA synthetase. The reaction takes place in the presence of glutamine and ATP through an activated gamma-phospho-Glu-tRNA(Gln). In Symbiobacterium thermophilum (strain DSM 24528 / JCM 14929 / IAM 14863 / T), this protein is Glutamyl-tRNA(Gln) amidotransferase subunit A.